Reading from the N-terminus, the 427-residue chain is tRNA(Ile)-lysidine synthase (427 aa).

21–26 (SGGADS) contributes to the ATP binding site.

The protein belongs to the tRNA(Ile)-lysidine synthase family.

Its subcellular location is the cytoplasm. It carries out the reaction cytidine(34) in tRNA(Ile2) + L-lysine + ATP = lysidine(34) in tRNA(Ile2) + AMP + diphosphate + H(+). In terms of biological role, ligates lysine onto the cytidine present at position 34 of the AUA codon-specific tRNA(Ile) that contains the anticodon CAU, in an ATP-dependent manner. Cytidine is converted to lysidine, thus changing the amino acid specificity of the tRNA from methionine to isoleucine. The sequence is that of tRNA(Ile)-lysidine synthase from Actinobacillus succinogenes (strain ATCC 55618 / DSM 22257 / CCUG 43843 / 130Z).